The following is a 140-amino-acid chain: L-fucose mutarotase (140 aa).

His22 serves as the catalytic Proton donor. Residues Asp30, Arg107, and 129–131 each bind substrate; that span reads YGN.

This sequence belongs to the RbsD / FucU family. FucU mutarotase subfamily. In terms of assembly, homodecamer.

It localises to the cytoplasm. It catalyses the reaction alpha-L-fucose = beta-L-fucose. It functions in the pathway carbohydrate metabolism; L-fucose metabolism. Its function is as follows. Involved in the anomeric conversion of L-fucose. The polypeptide is L-fucose mutarotase (Citrobacter koseri (strain ATCC BAA-895 / CDC 4225-83 / SGSC4696)).